Here is a 1224-residue protein sequence, read N- to C-terminus: ATP-dependent helicase/nuclease subunit A (1224 aa).

Residues 15-480 (VIWTDAQWQS…IDLSQNFRSR (466 aa)) form the UvrD-like helicase ATP-binding domain. 36-43 (AAAGSGKT) contacts ATP. The 295-residue stretch at 497–791 (EQVGEISYDD…RMMTIHSSKG (295 aa)) folds into the UvrD-like helicase C-terminal domain.

It belongs to the helicase family. AddA subfamily. In terms of assembly, heterodimer of AddA and AddB/RexB. Requires Mg(2+) as cofactor.

The catalysed reaction is Couples ATP hydrolysis with the unwinding of duplex DNA by translocating in the 3'-5' direction.. It catalyses the reaction ATP + H2O = ADP + phosphate + H(+). The heterodimer acts as both an ATP-dependent DNA helicase and an ATP-dependent, dual-direction single-stranded exonuclease. Recognizes the chi site generating a DNA molecule suitable for the initiation of homologous recombination. The AddA nuclease domain is required for chi fragment generation; this subunit has the helicase and 3' -&gt; 5' nuclease activities. The chain is ATP-dependent helicase/nuclease subunit A from Staphylococcus epidermidis (strain ATCC 12228 / FDA PCI 1200).